Consider the following 823-residue polypeptide: Protein FAM83G (823 aa).

Ala2 is modified (N-acetylalanine). The interval 2 to 312 is DUF1669; it reads AFSQVQCLDD…LYLMSHSVSL (311 aa). At Ser4 the chain carries Phosphoserine. Positions 75–108 are disordered; the sequence is DPGSEDPRGTGPSQGPEDNGVGDGEEASGADGVP. Ser124, Ser127, and Ser356 each carry phosphoserine. Residues 450–823 are disordered; it reads RDTSQASAQH…AQAPRDRKDP (374 aa). Positions 452 to 465 are enriched in polar residues; it reads TSQASAQHQLWKQS. Positions 497–508 are enriched in pro residues; the sequence is DPEPLPPVPKPR. The segment covering 529–543 has biased composition (basic and acidic residues); sequence LPKEEAPQNGTDHRL. The segment covering 578–587 has biased composition (acidic residues); the sequence is GVEEEDDDDY. Residues Ser610, Ser614, Ser616, Ser650, and Ser666 each carry the phosphoserine modification. 2 stretches are compositionally biased toward basic and acidic residues: residues 672 to 681 and 809 to 823; these read RGREEADALK and DSKR…RKDP.

It belongs to the FAM83 family. In terms of assembly, interacts with SMAD1 (via MH2 domain); in a SMAD4-independent manner. Directly interacts (via DUF1669) with casein kinase isoforms CSNK1A1 and CSNK1A1L. In terms of processing, phosphorylated in vitro by CSNK1A1. BMP signaling induces the phosphorylation by BMPR1A at Ser-610, Ser-614 and Ser-616. Phosphorylation at Ser-610 is necessary for the activation of SMAD4-independent BMP target genes such as NEDD9 and ASNS.

It localises to the cytoplasm. Its subcellular location is the cytosol. It is found in the nucleus. Substrate for type I BMP receptor kinase involved in regulation of some target genes of the BMP signaling pathway. Also regulates the expression of several non-BMP target genes, suggesting a role in other signaling pathways. The polypeptide is Protein FAM83G (FAM83G) (Homo sapiens (Human)).